A 409-amino-acid polypeptide reads, in one-letter code: tRNA-specific 2-thiouridylase MnmA (409 aa).

ATP is bound by residues 43–50 (AMSGGVDS) and L69. Residue C137 is the Nucleophile of the active site. C137 and C235 are disulfide-bonded. ATP is bound at residue G161. Residues 185-187 (KDQ) form an interaction with tRNA region. Residue C235 is the Cysteine persulfide intermediate of the active site.

The protein belongs to the MnmA/TRMU family.

The protein resides in the cytoplasm. It catalyses the reaction S-sulfanyl-L-cysteinyl-[protein] + uridine(34) in tRNA + AH2 + ATP = 2-thiouridine(34) in tRNA + L-cysteinyl-[protein] + A + AMP + diphosphate + H(+). Functionally, catalyzes the 2-thiolation of uridine at the wobble position (U34) of tRNA, leading to the formation of s(2)U34. This chain is tRNA-specific 2-thiouridylase MnmA, found in Caulobacter sp. (strain K31).